Consider the following 513-residue polypeptide: ATP synthase subunit alpha (513 aa).

Residue 169-176 (GDRQTGKT) participates in ATP binding.

This sequence belongs to the ATPase alpha/beta chains family. In terms of assembly, F-type ATPases have 2 components, CF(1) - the catalytic core - and CF(0) - the membrane proton channel. CF(1) has five subunits: alpha(3), beta(3), gamma(1), delta(1), epsilon(1). CF(0) has three main subunits: a(1), b(2) and c(9-12). The alpha and beta chains form an alternating ring which encloses part of the gamma chain. CF(1) is attached to CF(0) by a central stalk formed by the gamma and epsilon chains, while a peripheral stalk is formed by the delta and b chains.

The protein resides in the cell inner membrane. It catalyses the reaction ATP + H2O + 4 H(+)(in) = ADP + phosphate + 5 H(+)(out). Produces ATP from ADP in the presence of a proton gradient across the membrane. The alpha chain is a regulatory subunit. This chain is ATP synthase subunit alpha, found in Cronobacter sakazakii (strain ATCC BAA-894) (Enterobacter sakazakii).